The following is a 142-amino-acid chain: Putative pre-16S rRNA nuclease (142 aa).

The protein belongs to the YqgF nuclease family.

The protein localises to the cytoplasm. In terms of biological role, could be a nuclease involved in processing of the 5'-end of pre-16S rRNA. The polypeptide is Putative pre-16S rRNA nuclease (Saccharophagus degradans (strain 2-40 / ATCC 43961 / DSM 17024)).